We begin with the raw amino-acid sequence, 214 residues long: ATP-dependent Clp protease proteolytic subunit (214 aa).

The active-site Nucleophile is the Ser-110. His-135 is a catalytic residue.

The protein belongs to the peptidase S14 family. Fourteen ClpP subunits assemble into 2 heptameric rings which stack back to back to give a disk-like structure with a central cavity, resembling the structure of eukaryotic proteasomes.

Its subcellular location is the cytoplasm. The enzyme catalyses Hydrolysis of proteins to small peptides in the presence of ATP and magnesium. alpha-casein is the usual test substrate. In the absence of ATP, only oligopeptides shorter than five residues are hydrolyzed (such as succinyl-Leu-Tyr-|-NHMec, and Leu-Tyr-Leu-|-Tyr-Trp, in which cleavage of the -Tyr-|-Leu- and -Tyr-|-Trp bonds also occurs).. Cleaves peptides in various proteins in a process that requires ATP hydrolysis. Has a chymotrypsin-like activity. Plays a major role in the degradation of misfolded proteins. The protein is ATP-dependent Clp protease proteolytic subunit of Legionella pneumophila (strain Corby).